Consider the following 256-residue polypeptide: Deoxyribose-phosphate aldolase (256 aa).

D102 serves as the catalytic Proton donor/acceptor. K165 (schiff-base intermediate with acetaldehyde) is an active-site residue. The active-site Proton donor/acceptor is K197.

Belongs to the DeoC/FbaB aldolase family. DeoC type 2 subfamily.

It localises to the cytoplasm. The catalysed reaction is 2-deoxy-D-ribose 5-phosphate = D-glyceraldehyde 3-phosphate + acetaldehyde. It functions in the pathway carbohydrate degradation; 2-deoxy-D-ribose 1-phosphate degradation; D-glyceraldehyde 3-phosphate and acetaldehyde from 2-deoxy-alpha-D-ribose 1-phosphate: step 2/2. Catalyzes a reversible aldol reaction between acetaldehyde and D-glyceraldehyde 3-phosphate to generate 2-deoxy-D-ribose 5-phosphate. The protein is Deoxyribose-phosphate aldolase of Shewanella sp. (strain ANA-3).